Reading from the N-terminus, the 355-residue chain is Myricetin 7/4'-O-methyltransferase 2 (355 aa).

Position 221 (D221) interacts with S-adenosyl-L-methionine. The active-site Proton acceptor is the H259.

The protein belongs to the class I-like SAM-binding methyltransferase superfamily. Cation-independent O-methyltransferase family. As to quaternary structure, homodimer. Mainly expressed in leaves secreting glandular trichomes types 1 and 4 and, to a lesser extent, in storage trichomes type 6.

The enzyme catalyses quercetin + S-adenosyl-L-methionine = rhamnetin + S-adenosyl-L-homocysteine + H(+). The catalysed reaction is kaempferol + S-adenosyl-L-methionine = kaempferide + S-adenosyl-L-homocysteine + H(+). It catalyses the reaction myricetin + S-adenosyl-L-methionine = 7-O-methylmyricetin + S-adenosyl-L-homocysteine + H(+). It carries out the reaction kaempferide + S-adenosyl-L-methionine = 7,4'-O-dimethylkaempferol + S-adenosyl-L-homocysteine + H(+). The enzyme catalyses isorhamnetin + S-adenosyl-L-methionine = 3',4'-O-dimethylquercetin + S-adenosyl-L-homocysteine + 2 H(+). The catalysed reaction is 3',4',5,7-tetrahydroxy-3-methoxyflavone + S-adenosyl-L-methionine = 3',4',5-trihydroxy-3,7-dimethoxyflavone + S-adenosyl-L-homocysteine + H(+). It catalyses the reaction rhamnetin + S-adenosyl-L-methionine = 7,4'-O-dimethylquercetin + S-adenosyl-L-homocysteine + H(+). It carries out the reaction syringetin + S-adenosyl-L-methionine = 7,3',5'-O-trimethylmyricetin + S-adenosyl-L-homocysteine + H(+). The enzyme catalyses 3',4',5'-O-trimethylmyricetin + S-adenosyl-L-methionine = 7,3',4',5'-O-tetramethylmyricetin + S-adenosyl-L-homocysteine. Its pathway is flavonoid metabolism. In terms of biological role, flavonoid 7/4'-O-methyltransferase involved in the biosynthesis of polymethoxylated flavonoids natural products such as myricetin derivatives, aroma compounds possessing antioxidant properties and exhibiting pharmacological activities such as anti-carcinogen, anti-viral, anti-thrombotic, anti-diabetic, anti-atherosclerotic, and anti-inflammatory effects. Catalyzes S-adenosylmethionine-dependent regioselective 7/4'-O-methylation of flavonoids; active on various hydroxylated flavonoid substrates, including myricetin, quercetin and kaempferol. Mediates the formation of 4'-methyl derivatives from kaempferol, 3'-methyl quercetin (isorhamnetin), 7-methyl quercetin (rhamnetin) and 3'-methyl myricetin, producing 4'-methyl kaempferol (kaempferide), 3',4'-dimethyl quercetin (4'-O-methyl isorhamnetin), 7,4'-dimethyl quercetin (4'-O-methyl rhamnetin, rhamnacene) and 3',4'-dimethyl myricetin, respectively. Triggers the 7-O-methylation of quercetin, myricetin, 4'-methyl kaempferol (kaempferide), 3-methyl quercetin, 3',5'-dimethyl myricetin (syringetin) and 3',4',5'-trimethyl myricetin, thus leading to production of 7-methyl quercetin (rhamnetin), 7-methyl myricetin, 7,4'-dimethyl kaempferol (7-O-methyl kaempferide), 3,7-dimethyl quercetin, 7,3',5'-trimethyl myricetin (7-O-methyl syringetin) and 7,3',4',5'-tetramethyl myricetin, respectively. This Solanum habrochaites (Wild tomato) protein is Myricetin 7/4'-O-methyltransferase 2.